A 105-amino-acid polypeptide reads, in one-letter code: Mini zinc finger protein 1 (105 aa).

The interval 1–29 is disordered; it reads MGPQQDRSAAKPYANGSTAAAAAAGRKEN. The ZF-HD dimerization-type; degenerate zinc finger occupies 35-84; it reads YRECQRNHAASIGGHAVDGCREFMASGAEGTAAALLCAACGCHRSFHRRE.

As to quaternary structure, homo- and heterodimers.

The protein resides in the cytoplasm. In terms of biological role, inhibits zinc finger homeodomain (ZHD) transcription factors, by interacting with them to prevent both their nuclear localization and their DNA-binding properties. The sequence is that of Mini zinc finger protein 1 (MIF1) from Oryza sativa subsp. indica (Rice).